The following is a 94-amino-acid chain: Co-chaperonin GroES (94 aa).

This sequence belongs to the GroES chaperonin family. As to quaternary structure, heptamer of 7 subunits arranged in a ring. Interacts with the chaperonin GroEL.

The protein resides in the cytoplasm. Its function is as follows. Together with the chaperonin GroEL, plays an essential role in assisting protein folding. The GroEL-GroES system forms a nano-cage that allows encapsulation of the non-native substrate proteins and provides a physical environment optimized to promote and accelerate protein folding. GroES binds to the apical surface of the GroEL ring, thereby capping the opening of the GroEL channel. This is Co-chaperonin GroES from Streptococcus agalactiae.